The chain runs to 208 residues: Small ribosomal subunit protein uS4 (208 aa).

Positions 24–52 (GVKPFDVKTKKANKAPGQHGQARGGKQSE) are disordered. The S4 RNA-binding domain maps to 98-160 (SRLDNVVYRM…AKQQLRIKNA (63 aa)).

It belongs to the universal ribosomal protein uS4 family. As to quaternary structure, part of the 30S ribosomal subunit. Contacts protein S5. The interaction surface between S4 and S5 is involved in control of translational fidelity.

Its function is as follows. One of the primary rRNA binding proteins, it binds directly to 16S rRNA where it nucleates assembly of the body of the 30S subunit. Functionally, with S5 and S12 plays an important role in translational accuracy. The chain is Small ribosomal subunit protein uS4 from Acinetobacter baumannii (strain ACICU).